The primary structure comprises 311 residues: MGFKHKDIIGLQDLTREEIQLLLDTADNMKEINSRDIKKVPTLRGKTVVNVFYEASTRTRTSFEIAAKRLSADTINISASTSSVTKGETLSDTARNILAMKPDIIVMRHAASGAHHYLAQRVSCSVINAGDGAHEHPSQGLLDMLTMRQKFGTIEGLTVAIVGDITHSRVARSDIFGLTKMGAHVRLAGPPTMMPPGIERLGNVTVCRDMREAIEGVDVVMMLRIQLERQGKTLLPTLREYARYYGLNPQNLKLAKPGAMVMHPGPINRGVELSSYVADSDQSAILTQVENGVAVRMAMLYHVSGGELATE.

Carbamoyl phosphate-binding residues include Arg-58 and Thr-59. Lys-86 provides a ligand contact to L-aspartate. Residues Arg-108, His-136, and Gln-139 each contribute to the carbamoyl phosphate site. 2 residues coordinate L-aspartate: Arg-169 and Arg-224. Residues Gly-265 and Pro-266 each contribute to the carbamoyl phosphate site.

This sequence belongs to the aspartate/ornithine carbamoyltransferase superfamily. ATCase family. Heterododecamer (2C3:3R2) of six catalytic PyrB chains organized as two trimers (C3), and six regulatory PyrI chains organized as three dimers (R2).

The catalysed reaction is carbamoyl phosphate + L-aspartate = N-carbamoyl-L-aspartate + phosphate + H(+). It participates in pyrimidine metabolism; UMP biosynthesis via de novo pathway; (S)-dihydroorotate from bicarbonate: step 2/3. Its function is as follows. Catalyzes the condensation of carbamoyl phosphate and aspartate to form carbamoyl aspartate and inorganic phosphate, the committed step in the de novo pyrimidine nucleotide biosynthesis pathway. In Geobacter sulfurreducens (strain ATCC 51573 / DSM 12127 / PCA), this protein is Aspartate carbamoyltransferase catalytic subunit.